Consider the following 126-residue polypeptide: Fluoride-specific ion channel FluC (126 aa).

Helical transmembrane passes span 2-22 and 36-56; these read IKSLFAVIIGGSVGCTLRWLL and GTLVVNLLAGLIIGTALAYFL. Residues Gly75 and Ser78 each coordinate Na(+). A run of 2 helical transmembrane segments spans residues 80–100 and 105–125; these read FSTFSVEVFALLQAGNYIWAL and VHVIGSLIMTALGFFIITILF.

This sequence belongs to the fluoride channel Fluc/FEX (TC 1.A.43) family. Homodimer.

The protein resides in the cell inner membrane. The enzyme catalyses fluoride(in) = fluoride(out). With respect to regulation, na(+) is not transported, but it plays an essential structural role and its presence is essential for fluoride channel function. Functionally, fluoride-specific ion channel. Important for reducing fluoride concentration in the cell, thus reducing its toxicity. Is highly specific for fluoride ions and cannot transport chloride ions. The polypeptide is Fluoride-specific ion channel FluC (Escherichia coli O1:K1 / APEC).